Here is a 166-residue protein sequence, read N- to C-terminus: Thiamine precursor transporter HmpT (166 aa).

The next 5 helical transmembrane spans lie at 14-34, 35-55, 62-82, 105-125, and 126-146; these read LLAI…FPIP, GSAG…VFLF, IIGG…NYMF, FLLS…LMYG, and WGSA…GFVL.

In terms of assembly, in E.coli forms a stable energy-coupling factor (ECF) transporter complex composed of 2 membrane-embedded substrate-binding protein (S component), 2 ATP-binding proteins (A and A' components) and 2 transmembrane proteins (T component), probably with a stoichiometry of 2:1:1:2. May be able to interact with more than 1 S component at a time.

Its subcellular location is the cell membrane. Its function is as follows. Probably a thiamine precursor-binding protein that interacts with the energy-coupling factor (ECF) ABC-transporter complex. Unlike classic ABC transporters this ECF transporter provides the energy necessary to transport a number of different substrates. The substrates themselves are bound by transmembrane, not extracytoplasmic soluble proteins. The chain is Thiamine precursor transporter HmpT (hmpT) from Lactococcus lactis subsp. cremoris (strain MG1363).